Consider the following 61-residue polypeptide: Large ribosomal subunit protein bL28 (61 aa).

The segment at 1–27 (MAKDFVTGKKTTFGNTRSHALNSSSRS) is disordered. Residues 9 to 27 (KKTTFGNTRSHALNSSSRS) are compositionally biased toward polar residues.

Belongs to the bacterial ribosomal protein bL28 family.

In Lactobacillus delbrueckii subsp. bulgaricus (strain ATCC 11842 / DSM 20081 / BCRC 10696 / JCM 1002 / NBRC 13953 / NCIMB 11778 / NCTC 12712 / WDCM 00102 / Lb 14), this protein is Large ribosomal subunit protein bL28.